We begin with the raw amino-acid sequence, 523 residues long: GMP synthase [glutamine-hydrolyzing] (523 aa).

A Glutamine amidotransferase type-1 domain is found at 8-205 (KILILDFGSQ…VVNICGCETK (198 aa)). Cysteine 85 functions as the Nucleophile in the catalytic mechanism. Active-site residues include histidine 179 and glutamate 181. In terms of domain architecture, GMPS ATP-PPase spans 206-398 (WTAENIIEDA…LGLPAEMINR (193 aa)). ATP is bound at residue 233 to 239 (SGGVDSS).

Homodimer.

It catalyses the reaction XMP + L-glutamine + ATP + H2O = GMP + L-glutamate + AMP + diphosphate + 2 H(+). The protein operates within purine metabolism; GMP biosynthesis; GMP from XMP (L-Gln route): step 1/1. Functionally, catalyzes the synthesis of GMP from XMP. This is GMP synthase [glutamine-hydrolyzing] (guaA) from Haemophilus influenzae (strain ATCC 51907 / DSM 11121 / KW20 / Rd).